The primary structure comprises 273 residues: Bifunctional protein FolD (273 aa).

Residues 152 to 154, threonine 179, and isoleucine 220 contribute to the NADP(+) site; that span reads GRS.

Belongs to the tetrahydrofolate dehydrogenase/cyclohydrolase family. In terms of assembly, homodimer.

The enzyme catalyses (6R)-5,10-methylene-5,6,7,8-tetrahydrofolate + NADP(+) = (6R)-5,10-methenyltetrahydrofolate + NADPH. It catalyses the reaction (6R)-5,10-methenyltetrahydrofolate + H2O = (6R)-10-formyltetrahydrofolate + H(+). Its pathway is one-carbon metabolism; tetrahydrofolate interconversion. In terms of biological role, catalyzes the oxidation of 5,10-methylenetetrahydrofolate to 5,10-methenyltetrahydrofolate and then the hydrolysis of 5,10-methenyltetrahydrofolate to 10-formyltetrahydrofolate. The sequence is that of Bifunctional protein FolD from Petrotoga mobilis (strain DSM 10674 / SJ95).